The primary structure comprises 236 residues: Small ribosomal subunit protein uS2c (236 aa).

It belongs to the universal ribosomal protein uS2 family.

The protein resides in the plastid. The protein localises to the chloroplast. The sequence is that of Small ribosomal subunit protein uS2c (rps2) from Morus indica (Mulberry).